A 226-amino-acid polypeptide reads, in one-letter code: Large ribosomal subunit protein uL1 (226 aa).

The protein belongs to the universal ribosomal protein uL1 family. As to quaternary structure, part of the 50S ribosomal subunit.

Binds directly to 23S rRNA. The L1 stalk is quite mobile in the ribosome, and is involved in E site tRNA release. In terms of biological role, protein L1 is also a translational repressor protein, it controls the translation of the L11 operon by binding to its mRNA. The protein is Large ribosomal subunit protein uL1 of Borreliella burgdorferi (strain ZS7) (Borrelia burgdorferi).